Here is an 85-residue protein sequence, read N- to C-terminus: Small ribosomal subunit protein bS16 (85 aa).

Belongs to the bacterial ribosomal protein bS16 family.

The polypeptide is Small ribosomal subunit protein bS16 (Clostridium kluyveri (strain NBRC 12016)).